The primary structure comprises 574 residues: Proline--tRNA ligase (574 aa).

This sequence belongs to the class-II aminoacyl-tRNA synthetase family. ProS type 1 subfamily. As to quaternary structure, homodimer.

Its subcellular location is the cytoplasm. It catalyses the reaction tRNA(Pro) + L-proline + ATP = L-prolyl-tRNA(Pro) + AMP + diphosphate. In terms of biological role, catalyzes the attachment of proline to tRNA(Pro) in a two-step reaction: proline is first activated by ATP to form Pro-AMP and then transferred to the acceptor end of tRNA(Pro). As ProRS can inadvertently accommodate and process non-cognate amino acids such as alanine and cysteine, to avoid such errors it has two additional distinct editing activities against alanine. One activity is designated as 'pretransfer' editing and involves the tRNA(Pro)-independent hydrolysis of activated Ala-AMP. The other activity is designated 'posttransfer' editing and involves deacylation of mischarged Ala-tRNA(Pro). The misacylated Cys-tRNA(Pro) is not edited by ProRS. This Oleidesulfovibrio alaskensis (strain ATCC BAA-1058 / DSM 17464 / G20) (Desulfovibrio alaskensis) protein is Proline--tRNA ligase.